Here is a 397-residue protein sequence, read N- to C-terminus: Flavohemoprotein A (397 aa).

The 136-residue stretch at 2–137 (SLSQQSISII…IAQAFIDAEA (136 aa)) folds into the Globin domain. A heme b-binding site is contributed by His84. Catalysis depends on charge relay system residues Tyr94 and Glu136. The reductase stretch occupies residues 150–397 (WRDTREFIVD…YEIFGPLTNV (248 aa)). Residues 151–266 (RDTREFIVDR…SPPAGDYVVD (116 aa)) form the FAD-binding FR-type domain. FAD is bound by residues Tyr189 and 208 to 211 (RHYS). An NADP(+)-binding site is contributed by 279-284 (GVGITP). 390–393 (IFGP) serves as a coordination point for FAD.

This sequence belongs to the globin family. Two-domain flavohemoproteins subfamily. It in the C-terminal section; belongs to the flavoprotein pyridine nucleotide cytochrome reductase family. The cofactor is FAD. Requires heme b as cofactor.

It is found in the cytoplasm. It carries out the reaction 2 nitric oxide + NADPH + 2 O2 = 2 nitrate + NADP(+) + H(+). It catalyses the reaction 2 nitric oxide + NADH + 2 O2 = 2 nitrate + NAD(+) + H(+). Functionally, is involved in NO detoxification in an aerobic process, termed nitric oxide dioxygenase (NOD) reaction that utilizes O(2) and NAD(P)H to convert NO to nitrate, which protects the cell from various noxious nitrogen compounds. Therefore, plays a central role in the inducible response to nitrosative stress. In terms of biological role, in the presence of oxygen and NADH, it has NADH oxidase activity, which leads to the generation of superoxide and H(2)O(2). Under anaerobic conditions, it also exhibits nitric oxide reductase and FAD reductase activities. However, all these reactions are much lower than NOD activity. The protein is Flavohemoprotein A (fhbA) of Dictyostelium discoideum (Social amoeba).